Here is a 791-residue protein sequence, read N- to C-terminus: Ataxin-2 homolog (791 aa).

The segment covering 1–22 (MATRSVSMKQTSQRAASPNKTQ) has biased composition (polar residues). Disordered stretches follow at residues 1–28 (MATRSVSMKQTSQRAASPNKTQGAKKWS), 60–100 (RGGV…QQRV), 112–134 (RTETRQRELRRWMPDPEDAGVPL), 235–311 (TRSN…KEGQ), 326–423 (SLDS…TKLG), 452–505 (KPAP…PVSS), 613–634 (NPSQHTSVAPSPNGTPTSGNSS), and 707–791 (PMYG…EAKP). Over residues 76-96 (SLASSEENVSSVSGSAKSNNS) the composition is skewed to low complexity. Composition is skewed to basic and acidic residues over residues 112-125 (RTETRQRELRRWMP) and 243-256 (NNKDQKPKNHEAPH). The segment covering 326 to 337 (SLDSKQPSSTKS) has biased composition (polar residues). Basic and acidic residues-rich tracts occupy residues 360–371 (DSKEPRKEEAEK) and 395–418 (SKEEEKPSTEPEKPSVVTQRKETT). Residues 473–486 (SIPSTTPQSPSVVS) are compositionally biased toward low complexity. Residues 487 to 497 (NGENKPSSSPV) show a composition bias toward polar residues. 2 stretches are compositionally biased toward low complexity: residues 715-725 (SNSQRSFNSSN) and 734-760 (NNNASNTFSHSNASTSSSLNAAPNTTA). Residues 774 to 791 (DATEKTEKDASANQEAKP) show a composition bias toward basic and acidic residues.

This sequence belongs to the ataxin-2 family. As to quaternary structure, interacts with mkt1.

It is found in the cytoplasm. Its function is as follows. Involved in post-transcriptional regulation of gene expression, probably by association with mkt1. The chain is Ataxin-2 homolog from Schizosaccharomyces pombe (strain 972 / ATCC 24843) (Fission yeast).